The sequence spans 353 residues: Photosystem II protein D1 (353 aa).

The residue at position 2 (Thr-2) is an N-acetylthreonine. Position 2 is a phosphothreonine (Thr-2). A run of 3 helical transmembrane segments spans residues 29-46, 118-133, and 142-156; these read YIGW…TATS, HFLL…EWEL, and WIAV…AATA. His-118 serves as a coordination point for chlorophyll a. Residue Tyr-126 coordinates pheophytin a. [CaMn4O5] cluster contacts are provided by Asp-170 and Glu-189. A helical membrane pass occupies residues 197-218; sequence FHMLGVAGVFGGSLFSAMHGSL. His-198 contacts chlorophyll a. A quinone-binding positions include His-215 and 264 to 265; that span reads SF. His-215 is a binding site for Fe cation. His-272 serves as a coordination point for Fe cation. The chain crosses the membrane as a helical span at residues 274–288; it reads FLAAWPVAGIWFTAL. [CaMn4O5] cluster contacts are provided by His-332, Glu-333, Asp-342, and Ala-344. Positions 345–353 are excised as a propeptide; it reads AVESISIGG.

It belongs to the reaction center PufL/M/PsbA/D family. In terms of assembly, PSII is composed of 1 copy each of membrane proteins PsbA, PsbB, PsbC, PsbD, PsbE, PsbF, PsbH, PsbI, PsbJ, PsbK, PsbL, PsbM, PsbT, PsbX, PsbY, PsbZ, Psb30/Ycf12, at least 3 peripheral proteins of the oxygen-evolving complex and a large number of cofactors. It forms dimeric complexes. The D1/D2 heterodimer binds P680, chlorophylls that are the primary electron donor of PSII, and subsequent electron acceptors. It shares a non-heme iron and each subunit binds pheophytin, quinone, additional chlorophylls, carotenoids and lipids. D1 provides most of the ligands for the Mn4-Ca-O5 cluster of the oxygen-evolving complex (OEC). There is also a Cl(-1) ion associated with D1 and D2, which is required for oxygen evolution. The PSII complex binds additional chlorophylls, carotenoids and specific lipids. serves as cofactor. Tyr-161 forms a radical intermediate that is referred to as redox-active TyrZ, YZ or Y-Z. In terms of processing, C-terminally processed by CTPA; processing is essential to allow assembly of the oxygen-evolving complex and thus photosynthetic growth.

The protein resides in the plastid. It is found in the chloroplast thylakoid membrane. It carries out the reaction 2 a plastoquinone + 4 hnu + 2 H2O = 2 a plastoquinol + O2. Its function is as follows. Photosystem II (PSII) is a light-driven water:plastoquinone oxidoreductase that uses light energy to abstract electrons from H(2)O, generating O(2) and a proton gradient subsequently used for ATP formation. It consists of a core antenna complex that captures photons, and an electron transfer chain that converts photonic excitation into a charge separation. The D1/D2 (PsbA/PsbD) reaction center heterodimer binds P680, the primary electron donor of PSII as well as several subsequent electron acceptors. The chain is Photosystem II protein D1 from Pinus koraiensis (Korean pine).